Consider the following 196-residue polypeptide: Deoxyribose-phosphate aldolase (196 aa).

The Proton donor/acceptor role is filled by D91. K153 acts as the Schiff-base intermediate with acetaldehyde in catalysis. The Proton donor/acceptor role is filled by K182.

This sequence belongs to the DeoC/FbaB aldolase family. DeoC type 1 subfamily.

It localises to the cytoplasm. It carries out the reaction 2-deoxy-D-ribose 5-phosphate = D-glyceraldehyde 3-phosphate + acetaldehyde. The protein operates within carbohydrate degradation; 2-deoxy-D-ribose 1-phosphate degradation; D-glyceraldehyde 3-phosphate and acetaldehyde from 2-deoxy-alpha-D-ribose 1-phosphate: step 2/2. Its function is as follows. Catalyzes a reversible aldol reaction between acetaldehyde and D-glyceraldehyde 3-phosphate to generate 2-deoxy-D-ribose 5-phosphate. This is Deoxyribose-phosphate aldolase from Mycoplasma mycoides subsp. mycoides SC (strain CCUG 32753 / NCTC 10114 / PG1).